A 331-amino-acid chain; its full sequence is F-box protein At2g26160 (331 aa).

An F-box domain is found at 4-52 (PEWSELPGDLINLTANRFSSISDVLRVRSICKPWRSAAATPKSFQCNLP).

The sequence is that of F-box protein At2g26160 from Arabidopsis thaliana (Mouse-ear cress).